We begin with the raw amino-acid sequence, 87 residues long: Asparagine--tRNA ligase, cytoplasmic (87 aa).

Belongs to the class-II aminoacyl-tRNA synthetase family.

Its subcellular location is the cytoplasm. It carries out the reaction tRNA(Asn) + L-asparagine + ATP = L-asparaginyl-tRNA(Asn) + AMP + diphosphate + H(+). The chain is Asparagine--tRNA ligase, cytoplasmic (DED81) from Saccharomyces paradoxus (Yeast).